A 298-amino-acid polypeptide reads, in one-letter code: ADP/ATP translocase 2 (298 aa).

Position 1 is an N-acetylmethionine (Met-1). At 1-7 (MTDAAVS) the chain is on the mitochondrial intermembrane side. An N-acetylthreonine; in ADP/ATP translocase 2, N-terminally processed modification is found at Thr-2. The Solcar 1 repeat unit spans residues 6–98 (VSFAKDFLAG…FAFKDKYKQI (93 aa)). Ser-7 is subject to Phosphoserine. The helical transmembrane segment at 8 to 37 (FAKDFLAGGVAAAISKTAVAPIERVKLLLQ) threads the bilayer. Residue Lys-23 is modified to N6-malonyllysine. The Mitochondrial matrix portion of the chain corresponds to 38-74 (VQHASKQITADKQYKGIIDCVVRIPKEQGVLSFWRGN). At Lys-43 the chain carries N6-succinyllysine. Lys-52 bears the N6,N6,N6-trimethyllysine; alternate mark. Lys-52 bears the N6,N6-dimethyllysine; alternate mark. Lys-52 carries the N6-methyllysine; alternate modification. Residues 75–99 (LANVIRYFPTQALNFAFKDKYKQIF) traverse the membrane as a helical segment. ADP contacts are provided by Arg-80 and Lys-92. N6-malonyllysine occurs at positions 92 and 96. The Mitochondrial intermembrane portion of the chain corresponds to 100 to 109 (LGGVDKRTQF). Lys-105 carries the post-translational modification N6-acetyllysine; alternate. An N6-succinyllysine; alternate modification is found at Lys-105. Residues 110–130 (WRYFAGNLASGGAAGATSLCF) form a helical membrane-spanning segment. 2 Solcar repeats span residues 111–201 (RYFA…AKGM) and 212–297 (ISWM…IKKY). The Mitochondrial matrix segment spans residues 131–178 (VYPLDFARTRLAADVGKAGAEREFKGLGDCLVKIYKSDGIKGLYQGFN). Lys-147 is subject to N6-methyllysine; alternate. An N6-acetyllysine; alternate mark is found at Lys-147 and Lys-155. Lys-147 and Lys-155 each carry N6-succinyllysine; alternate. The residue at position 147 (Lys-147) is an N6-malonyllysine; alternate. N6-acetyllysine is present on residues Lys-163 and Lys-166. The helical transmembrane segment at 179-199 (VSVQGIIIYRAAYFGIYDTAK) threads the bilayer. Residues 200-210 (GMLPDPKNTHI) are Mitochondrial intermembrane-facing. The helical transmembrane segment at 211–231 (FISWMIAQSVTAVAGLTSYPF) threads the bilayer. The Mitochondrial matrix segment spans residues 232 to 273 (DTVRRRMMMQSGRKGTDIMYTGTLDCWRKIARDEGGKAFFKG). ADP is bound at residue Arg-235. An important for transport activity region spans residues 235-240 (RRRMMM). The Nucleotide carrier signature motif signature appears at 235 to 240 (RRRMMM). Position 268 is an N6-acetyllysine; alternate (Lys-268). At Lys-268 the chain carries N6-succinyllysine; alternate. The chain crosses the membrane as a helical span at residues 274–291 (AWSNVLRGMGGAFVLVLY). The Mitochondrial intermembrane segment spans residues 292–298 (DEIKKYT).

It belongs to the mitochondrial carrier (TC 2.A.29) family. In terms of assembly, monomer. Component of the MMXD complex, which includes CIAO1, ERCC2, CIAO2B, MMS19 and SLC25A5/ANT2. Interacts with AK4. Interacts with TIMM44; leading to inhibit the presequence translocase TIMM23, thereby promoting stabilization of PINK1. In terms of processing, trimethylated by ANTKMT at Lys-52. As to expression, present in kidney, brain, heart, liver and skeletal muscle.

It localises to the mitochondrion inner membrane. The protein resides in the membrane. The catalysed reaction is ADP(in) + ATP(out) = ADP(out) + ATP(in). It catalyses the reaction H(+)(in) = H(+)(out). Its activity is regulated as follows. The matrix-open state (m-state) is inhibited by the membrane-permeable bongkrekic acid (BKA). The cytoplasmic-open state (c-state) is inhibited by the membrane-impermeable toxic inhibitor carboxyatractyloside (CATR). Proton transporter activity is inhibited by ADP:ATP antiporter activity. In terms of biological role, ADP:ATP antiporter that mediates import of ADP into the mitochondrial matrix for ATP synthesis, and export of ATP out to fuel the cell. Cycles between the cytoplasmic-open state (c-state) and the matrix-open state (m-state): operates by the alternating access mechanism with a single substrate-binding site intermittently exposed to either the cytosolic (c-state) or matrix (m-state) side of the inner mitochondrial membrane. In addition to its ADP:ATP antiporter activity, also involved in mitochondrial uncoupling and mitochondrial permeability transition pore (mPTP) activity. Plays a role in mitochondrial uncoupling by acting as a proton transporter: proton transport uncouples the proton flows via the electron transport chain and ATP synthase to reduce the efficiency of ATP production and cause mitochondrial thermogenesis. Proton transporter activity is inhibited by ADP:ATP antiporter activity, suggesting that SLC25A5/ANT2 acts as a master regulator of mitochondrial energy output by maintaining a delicate balance between ATP production (ADP:ATP antiporter activity) and thermogenesis (proton transporter activity). Proton transporter activity requires free fatty acids as cofactor, but does not transport it. Probably mediates mitochondrial uncoupling in tissues that do not express UCP1. Also plays a key role in mPTP opening, a non-specific pore that enables free passage of the mitochondrial membranes to solutes of up to 1.5 kDa, and which contributes to cell death. It is however unclear if SLC25A5/ANT2 constitutes a pore-forming component of mPTP or regulates it. Acts as a regulator of mitophagy independently of ADP:ATP antiporter activity: promotes mitophagy via interaction with TIMM44, leading to inhibit the presequence translocase TIMM23, thereby promoting stabilization of PINK1. As part of the mitotic spindle-associated MMXD complex it may play a role in chromosome segregation. This Rattus norvegicus (Rat) protein is ADP/ATP translocase 2.